The primary structure comprises 396 residues: Tyrosine--tRNA ligase (396 aa).

Tyrosine 36 lines the L-tyrosine pocket. The short motif at 41 to 50 (PTANSLHIGN) is the 'HIGH' region element. 2 residues coordinate L-tyrosine: tyrosine 165 and glutamine 169. A 'KMSKS' region motif is present at residues 225 to 229 (KMGKT). Lysine 228 serves as a coordination point for ATP. The S4 RNA-binding domain occupies 331-394 (TNLIDYLVET…KKSFLTIKTV (64 aa)).

It belongs to the class-I aminoacyl-tRNA synthetase family. TyrS type 1 subfamily. Homodimer.

The protein localises to the cytoplasm. It catalyses the reaction tRNA(Tyr) + L-tyrosine + ATP = L-tyrosyl-tRNA(Tyr) + AMP + diphosphate + H(+). Catalyzes the attachment of tyrosine to tRNA(Tyr) in a two-step reaction: tyrosine is first activated by ATP to form Tyr-AMP and then transferred to the acceptor end of tRNA(Tyr). The sequence is that of Tyrosine--tRNA ligase from Mycoplasma genitalium (strain ATCC 33530 / DSM 19775 / NCTC 10195 / G37) (Mycoplasmoides genitalium).